The following is a 72-amino-acid chain: uncharacterized protein (72 aa).

This is an uncharacterized protein from Bacillus subtilis (strain 168).